The chain runs to 477 residues: Aspartyl/glutamyl-tRNA(Asn/Gln) amidotransferase subunit B (477 aa).

The protein belongs to the GatB/GatE family. GatB subfamily. As to quaternary structure, heterotrimer of A, B and C subunits.

It catalyses the reaction L-glutamyl-tRNA(Gln) + L-glutamine + ATP + H2O = L-glutaminyl-tRNA(Gln) + L-glutamate + ADP + phosphate + H(+). The catalysed reaction is L-aspartyl-tRNA(Asn) + L-glutamine + ATP + H2O = L-asparaginyl-tRNA(Asn) + L-glutamate + ADP + phosphate + 2 H(+). Its function is as follows. Allows the formation of correctly charged Asn-tRNA(Asn) or Gln-tRNA(Gln) through the transamidation of misacylated Asp-tRNA(Asn) or Glu-tRNA(Gln) in organisms which lack either or both of asparaginyl-tRNA or glutaminyl-tRNA synthetases. The reaction takes place in the presence of glutamine and ATP through an activated phospho-Asp-tRNA(Asn) or phospho-Glu-tRNA(Gln). The protein is Aspartyl/glutamyl-tRNA(Asn/Gln) amidotransferase subunit B of Coxiella burnetii (strain CbuK_Q154) (Coxiella burnetii (strain Q154)).